A 506-amino-acid chain; its full sequence is 2-isopropylmalate synthase (506 aa).

In terms of domain architecture, Pyruvate carboxyltransferase spans 8–272; sequence LIVFDTTLRD…ETGIQLKEIL (265 aa). The Mn(2+) site is built by aspartate 17, histidine 206, histidine 208, and asparagine 242. The interval 396–506 is regulatory domain; it reads ELEYVAVTVC…YLNAVNKALL (111 aa).

The protein belongs to the alpha-IPM synthase/homocitrate synthase family. LeuA type 1 subfamily. As to quaternary structure, homodimer. The cofactor is Mn(2+).

Its subcellular location is the cytoplasm. It catalyses the reaction 3-methyl-2-oxobutanoate + acetyl-CoA + H2O = (2S)-2-isopropylmalate + CoA + H(+). It participates in amino-acid biosynthesis; L-leucine biosynthesis; L-leucine from 3-methyl-2-oxobutanoate: step 1/4. In terms of biological role, catalyzes the condensation of the acetyl group of acetyl-CoA with 3-methyl-2-oxobutanoate (2-ketoisovalerate) to form 3-carboxy-3-hydroxy-4-methylpentanoate (2-isopropylmalate). This chain is 2-isopropylmalate synthase, found in Methylacidiphilum infernorum (isolate V4) (Methylokorus infernorum (strain V4)).